Consider the following 894-residue polypeptide: Phosphinomethylmalate isomerase (894 aa).

Cys438, Cys504, and Cys507 together coordinate [4Fe-4S] cluster.

It belongs to the aconitase/IPM isomerase family. It depends on [4Fe-4S] cluster as a cofactor.

The enzyme catalyses phosphinomethylmalate = phosphinomethylisomalate. The catalysed reaction is phosphinomethylmalate = 2-(phosphinatomethylidene)butanedioate + H2O. It catalyses the reaction 2-(phosphinatomethylidene)butanedioate + H2O = phosphinomethylisomalate. Its pathway is secondary metabolite biosynthesis; bialaphos biosynthesis. In terms of biological role, isomerase involved in the biosynthesis of phosphinothricin tripeptide (PTT), also known as bialaphos (BA), a natural-product antibiotic and potent herbicide. Probably catalyzes the isomerization of phosphinomethylmalate to phosphinomethylisomalate. Shows no standard aconitase activity with citrate as a substrate and is not able to complement an acnA mutant. The sequence is that of Phosphinomethylmalate isomerase from Streptomyces viridochromogenes (strain DSM 40736 / JCM 4977 / BCRC 1201 / Tue 494).